The following is a 359-amino-acid chain: DNA polymerase IV (359 aa).

Residues 7-188 (IIHIDMDAFY…LPIGKFFGVG (182 aa)) form the UmuC domain. Residues aspartate 11 and aspartate 106 each contribute to the Mg(2+) site. Residue glutamate 107 is part of the active site.

Belongs to the DNA polymerase type-Y family. As to quaternary structure, monomer. It depends on Mg(2+) as a cofactor.

The protein resides in the cytoplasm. It catalyses the reaction DNA(n) + a 2'-deoxyribonucleoside 5'-triphosphate = DNA(n+1) + diphosphate. Its function is as follows. Poorly processive, error-prone DNA polymerase involved in untargeted mutagenesis. Copies undamaged DNA at stalled replication forks, which arise in vivo from mismatched or misaligned primer ends. These misaligned primers can be extended by PolIV. Exhibits no 3'-5' exonuclease (proofreading) activity. May be involved in translesional synthesis, in conjunction with the beta clamp from PolIII. In Clostridium perfringens (strain SM101 / Type A), this protein is DNA polymerase IV.